Consider the following 1172-residue polypeptide: NACHT, LRR and PYD domains-containing protein 1b allele 3 (1172 aa).

Residues 1 to 22 (MEESPPKQKSNTKVAQHEGQQD) are disordered. The NACHT domain occupies 126-435 (QLVIIEGAAG…EFFAAISCIL (310 aa)). An ATP-binding site is contributed by 132–139 (GAAGIGKS). LRR repeat units follow at residues 627–647 (NLEG…QSLC) and 684–704 (SLTE…RMLC). Residues 789-922 (FWGPTGPVAT…GYTVLKNPSF (134 aa)) form a ZU5 region. The region spanning 789 to 1072 (FWGPTGPVAT…LRPALPRIAQ (284 aa)) is the FIIND domain. The UPA stretch occupies residues 923–1072 (SPMGDVLRII…LRPALPRIAQ (150 aa)). In terms of domain architecture, CARD spans 1082-1165 (HFMDQHREQL…HLVMDLLEKS (84 aa)).

It belongs to the NLRP family. Post-translationally, in contrast to allele 1 and 2, not able to mediate autocatalytic cleavage. Expressed in macrophages.

It is found in the cytoplasm. The protein localises to the cytosol. Its activity is regulated as follows. In contrast to allele 1, does not undergo autocatalytic cleavage within the FIIND domain and its mode of activation remains unclear. In contrast to alleles 1 and 2, allele 3 is not activated by Val-boroPro (Talabostat, PT-100). Not activated by cleavage by B.anthracis lethal toxin (LT) endopeptidase. Not activated by metabolic inhibitors, such as 2-deoxy-D-glucose and sodium azide. May act as the sensor component of the Nlrp1b inflammasome, which mediates inflammasome activation in response to various pathogen-associated signals, leading to subsequent pyroptosis. Inflammasomes are supramolecular complexes that assemble in the cytosol in response to pathogens and other damage-associated signals and play critical roles in innate immunity and inflammation. May act as a recognition receptor (PRR), which recognizes specific pathogens and other damage-associated signals and forms an inflammasome complex: the inflammasome directly recruits pro-caspase-1 (proCASP1) independently of PYCARD/ASC and promotes caspase-1 (CASP1) activation, which subsequently cleaves and activates inflammatory cytokines IL1B and IL18 and gasdermin-D (GSDMD), leading to pyroptosis. In the absence of GSDMD expression, the Nlrp1b inflammasome is able to recruit and activate CASP8, leading to activation of gasdermin-E (GSDME). Contrary to Nlrp1b allele 1, allele 3 is not activated by Bacillus anthracis lethal toxin. The absence of autocatalytic cleavage within the FIIND domain, which regulates activation in other alleles, suggests that allele 3 may be non-functional. In Mus musculus (Mouse), this protein is NACHT, LRR and PYD domains-containing protein 1b allele 3.